The chain runs to 254 residues: Serine acetyltransferase (254 aa).

It belongs to the transferase hexapeptide repeat family.

Its subcellular location is the cytoplasm. The catalysed reaction is L-serine + acetyl-CoA = O-acetyl-L-serine + CoA. The protein operates within amino-acid biosynthesis; L-cysteine biosynthesis; L-cysteine from L-serine: step 1/2. This chain is Serine acetyltransferase (cysE), found in Buchnera aphidicola subsp. Baizongia pistaciae (strain Bp).